The primary structure comprises 426 residues: Endothelin-1 receptor (426 aa).

A signal peptide spans 1–20; it reads METFCLKVTFWVALVGYVIG. The Extracellular segment spans residues 21-79; the sequence is DHPESYSTNLSTPVDFTTFHGTELSFLVTTHRPTNLALPSNGSMHSYCPQQTKITSAFK. N-linked (GlcNAc...) asparagine glycosylation is found at N29 and N61. The chain crosses the membrane as a helical span at residues 80–101; sequence YINTVISCTIFIVGMVGNATLL. Residues 102-111 lie on the Cytoplasmic side of the membrane; the sequence is RIIYQNKCMR. The chain crosses the membrane as a helical span at residues 112-131; it reads NGPNALIASLALGDLIYVVI. Topologically, residues 132-158 are extracellular; that stretch reads DLPINVFKLLAGRWPFDHNDFGVFLCK. The cysteines at positions 157 and 238 are disulfide-linked. The chain crosses the membrane as a helical span at residues 159–180; the sequence is LFPFLQKSSVGITVLNLCALSV. Topologically, residues 181 to 204 are cytoplasmic; that stretch reads DRYRAVASWSRVQGIGIPLITAIE. The helical transmembrane segment at 205 to 228 threads the bilayer; sequence IVSIWILSFILAIPEAIGFVMVPF. At 229–255 the chain is on the extracellular side; sequence EYKGEQHKTCMLNATSKFMEFYQDVKD. N241 carries an N-linked (GlcNAc...) asparagine glycan. A helical transmembrane segment spans residues 256–277; the sequence is WWLFGFYFCMPLVCTAIFYTLM. Topologically, residues 278–305 are cytoplasmic; it reads TCEMLNRRNGSLRIALSEHLKQRREVAK. Residues 306-327 traverse the membrane as a helical segment; sequence TVFCLVVIFALCWFPLHLSRIL. Residues 328–346 lie on the Extracellular side of the membrane; sequence KKTVYDEMDKNRCELLSFL. A helical membrane pass occupies residues 347-371; sequence RLMDYIGINLATMNSCINPIALYFV. Over 372 to 426 the chain is Cytoplasmic; it reads SKKFKNCFQSCLCCCCYQSKSLMTSVPMNGTSIQWKNHEQNNHNTERSSHKDSIN. Phosphoserine is present on S424.

The protein belongs to the G-protein coupled receptor 1 family. Endothelin receptor subfamily. EDNRA sub-subfamily. In terms of assembly, interacts with HDAC7 and KAT5.

The protein localises to the cell membrane. Functionally, receptor for endothelin-1. Mediates its action by association with G proteins that activate a phosphatidylinositol-calcium second messenger system. The rank order of binding affinities for ET-A is: ET1 &gt; ET2 &gt;&gt; ET3. The polypeptide is Endothelin-1 receptor (Canis lupus familiaris (Dog)).